The sequence spans 146 residues: Ribosomal RNA large subunit methyltransferase H (146 aa).

Residues L68, G95, and 114 to 119 (LSSLTF) each bind S-adenosyl-L-methionine.

It belongs to the RNA methyltransferase RlmH family. As to quaternary structure, homodimer.

Its subcellular location is the cytoplasm. The catalysed reaction is pseudouridine(1915) in 23S rRNA + S-adenosyl-L-methionine = N(3)-methylpseudouridine(1915) in 23S rRNA + S-adenosyl-L-homocysteine + H(+). Its function is as follows. Specifically methylates the pseudouridine at position 1915 (m3Psi1915) in 23S rRNA. This chain is Ribosomal RNA large subunit methyltransferase H, found in Thermodesulfovibrio yellowstonii (strain ATCC 51303 / DSM 11347 / YP87).